A 214-amino-acid polypeptide reads, in one-letter code: Probable transaldolase 1 (214 aa).

Lysine 83 (schiff-base intermediate with substrate) is an active-site residue.

The protein belongs to the transaldolase family. Type 3B subfamily.

Its subcellular location is the cytoplasm. The enzyme catalyses D-sedoheptulose 7-phosphate + D-glyceraldehyde 3-phosphate = D-erythrose 4-phosphate + beta-D-fructose 6-phosphate. It functions in the pathway carbohydrate degradation; pentose phosphate pathway; D-glyceraldehyde 3-phosphate and beta-D-fructose 6-phosphate from D-ribose 5-phosphate and D-xylulose 5-phosphate (non-oxidative stage): step 2/3. In terms of biological role, transaldolase is important for the balance of metabolites in the pentose-phosphate pathway. The polypeptide is Probable transaldolase 1 (Listeria monocytogenes serotype 4b (strain F2365)).